The sequence spans 752 residues: Maltodextrin phosphorylase (752 aa).

K603 bears the N6-(pyridoxal phosphate)lysine mark.

The protein belongs to the glycogen phosphorylase family. Requires pyridoxal 5'-phosphate as cofactor.

It carries out the reaction [(1-&gt;4)-alpha-D-glucosyl](n) + phosphate = [(1-&gt;4)-alpha-D-glucosyl](n-1) + alpha-D-glucose 1-phosphate. Its function is as follows. Phosphorylase is an important allosteric enzyme in carbohydrate metabolism. Enzymes from different sources differ in their regulatory mechanisms and in their natural substrates. However, all known phosphorylases share catalytic and structural properties. The sequence is that of Maltodextrin phosphorylase (malP) from Streptococcus pneumoniae serotype 4 (strain ATCC BAA-334 / TIGR4).